Here is a 176-residue protein sequence, read N- to C-terminus: Probable chorismate pyruvate-lyase (176 aa).

Substrate-binding residues include Arg-70, Leu-108, and Glu-166.

Belongs to the UbiC family.

The protein localises to the cytoplasm. It catalyses the reaction chorismate = 4-hydroxybenzoate + pyruvate. It functions in the pathway cofactor biosynthesis; ubiquinone biosynthesis. Functionally, removes the pyruvyl group from chorismate, with concomitant aromatization of the ring, to provide 4-hydroxybenzoate (4HB) for the ubiquinone pathway. The polypeptide is Probable chorismate pyruvate-lyase (Dechloromonas aromatica (strain RCB)).